The sequence spans 425 residues: Peroxisomal membrane protein PEX14 (425 aa).

2 disordered regions span residues 49 to 89 (RSQG…YRNA) and 247 to 425 (DEPI…AAQS). The span at 56 to 76 (SSSVASQVSSYSPSASQSSVA) shows a compositional bias: low complexity. An SH3-binding motif is present at residues 89–97 (APPLPERDW). Residues 256–297 (PSLTTGANSLTSESSGRSSIPHSQSVPIRTQLTTPPSDSDTS) are compositionally biased toward polar residues. Basic and acidic residues-rich tracts occupy residues 315–324 (DILRKEKNRT) and 333–366 (LGKD…PEED).

Belongs to the peroxin-14 family. In terms of assembly, interacts with PEX13 (via SH3 domain); forming the PEX13-PEX14 docking complex. Interacts with PEX5 (via WxxxF/Y motifs). Interacts with PEX20 (via WxxxF/Y motifs). Interacts with PEX3, PEX7, PEX8 and PEX17. In terms of processing, phosphorylated on serine or threonine residues.

It is found in the peroxisome membrane. Its function is as follows. Component of the PEX13-PEX14 docking complex, a translocon channel that specifically mediates the import of peroxisomal cargo proteins bound to PEX5 or PEX20 receptors. The PEX13-PEX14 docking complex forms a large import pore which can be opened to a diameter of about 9 nm. Mechanistically, PEX5 (or PEX20) receptor along with cargo proteins associates with the PEX14 subunit of the PEX13-PEX14 docking complex in the cytosol, leading to the insertion of the receptor into the organelle membrane with the concomitant translocation of the cargo into the peroxisome matrix. In Komagataella pastoris (Yeast), this protein is Peroxisomal membrane protein PEX14.